Reading from the N-terminus, the 548-residue chain is Tau-cadinol synthase (548 aa).

Residues Asp303 and Asp307 each coordinate Mg(2+). 3 residues coordinate substrate: Asp303, Asp307, and Arg443. A DDXXD motif motif is present at residues 303 to 307 (DDTYD).

This sequence belongs to the terpene synthase family. Monomer. Mg(2+) is required as a cofactor. It depends on Mn(2+) as a cofactor. Constitutively expressed in aerial tissues, but barely observed in roots.

The protein localises to the cytoplasm. The catalysed reaction is (2E,6E)-farnesyl diphosphate + H2O = tau-cadinol + diphosphate. It participates in secondary metabolite biosynthesis; terpenoid biosynthesis. Sesquiterpene synthase that catalyzes the formation of a blend of sesquiterpenes and sesquiterpenoid alcohols. Converts farnesyl diphosphate to tau-cadinol. The protein is Tau-cadinol synthase of Zea mays (Maize).